We begin with the raw amino-acid sequence, 70 residues long: Conotoxin Im11.11 (70 aa).

A signal peptide spans 1 to 25 (MFRLTSVGCILLVIAFLNLVGLTNA). 4 disulfide bridges follow: Cys26/Cys40, Cys33/Cys45, Cys39/Cys49, and Cys44/Cys53. Proline amide is present on Pro56. A propeptide spanning residues 60-70 (TRLQGFFKHRR) is cleaved from the precursor.

This sequence belongs to the conotoxin I2 superfamily. Expressed by the venom duct.

It localises to the secreted. Its function is as follows. Probable neurotoxin. The polypeptide is Conotoxin Im11.11 (Conus imperialis (Imperial cone)).